The chain runs to 298 residues: Trimeric intracellular cation channel type A (298 aa).

Over 1-18 (MDLMSALSLGELALSFSR) the chain is Lumenal. A helical membrane pass occupies residues 19–39 (VPLFPVFDLSYFIVSIIYLKY). Topologically, residues 40–51 (EPGAVELSRRHP) are cytoplasmic. The chain crosses the membrane as a helical span at residues 52–72 (VASWLCAMLHCFGSYILADLL). Residues 73 to 85 (LGEPIIDYFSNSS) are Lumenal-facing. Residue glycine 74 participates in Ca(2+) binding. A helical transmembrane segment spans residues 86–106 (SILLASGVWYLIFFCPLDLFY). The Cytoplasmic portion of the chain corresponds to 107 to 144 (KCVCFLPVKLIFVAMKEVVRVRKIAVGIHHAHHHYHHG). Lysine 122 and arginine 126 together coordinate a 1,2-diacyl-sn-glycero-3-phospho-(1D-myo-inositol-4,5-bisphosphate). The helical transmembrane segment at 145 to 165 (WFIMIATGWVKGSGVALLSNV) threads the bilayer. Residues 166-178 (EQLLRGVWKPETN) are Lumenal-facing. A helical transmembrane segment spans residues 179–199 (EILHMSFPTKASLYGAILFTL). Residues 200-209 (QQTRWLPVSK) are Cytoplasmic-facing. A helical membrane pass occupies residues 210–230 (ASLIFVFTMFMVSCKVFLTAT). Topologically, residues 231 to 234 (HSHS) are lumenal. The helical transmembrane segment at 235-255 (SPFDILEGYICPVLFGATWGG) threads the bilayer. At 256–298 (DHHHDNHGAPHGMGLGTQHSGLPAKAKEELGEGSRKKKTKKAD) the chain is on the cytoplasmic side. Residues 260–298 (DNHGAPHGMGLGTQHSGLPAKAKEELGEGSRKKKTKKAD) form a disordered region. A compositionally biased stretch (basic and acidic residues) spans 280-289 (KAKEELGEGS).

This sequence belongs to the TMEM38 family. Homotrimer; conformation seems to be controled by binding to diacylglycerol (DAG). As to expression, expressed at high levels in heart and striated muscle. Also detected in brain, lung and kidney.

It is found in the sarcoplasmic reticulum membrane. It localises to the nucleus membrane. It catalyses the reaction K(+)(in) = K(+)(out). With respect to regulation, channel activity is activated by a change of voltage within the sarcoplasmic reticulum lumen and blocked by luminal high Ca(2+) levels. Its function is as follows. Intracellular monovalent cation channel required for maintenance of rapid intracellular calcium release. Acts as a potassium counter-ion channel that functions in synchronization with calcium release from intracellular stores. Opened by a change of voltage within the sarcoplasmic reticulum lumen. This chain is Trimeric intracellular cation channel type A (Tmem38a), found in Mus musculus (Mouse).